Here is a 124-residue protein sequence, read N- to C-terminus: MTTSSYFLLVALGLLLYVFQSSFGGEHVCWLGDPNHPQGICGPQVADIVEIRCEEKEAEQGGANNARANTGRTSSLMKRRGFLSLLKKRGKRDEGSPLQRSGRGIVCECCKHHCTKEEFTEYCH.

The N-terminal stretch at 1 to 24 (MTTSSYFLLVALGLLLYVFQSSFG) is a signal peptide. 4 disulfides stabilise this stretch: cysteine 29/cysteine 107, cysteine 41/cysteine 110, cysteine 53/cysteine 123, and cysteine 109/cysteine 114. A 4-hydroxyproline; partial modification is found at proline 34. The propeptide at 59–92 (EQGGANNARANTGRTSSLMKRRGFLSLLKKRGKR) is c peptide. Residue glutamate 118 is modified to 4-carboxyglutamate; partial.

This sequence belongs to the insulin family. As to quaternary structure, heterodimer of A and B chains; disulfide-linked. In terms of tissue distribution, expressed by the venom gland.

It localises to the secreted. Functionally, this venom insulin facilitates prey capture by rapidly inducing hypoglycemic shock. Intraperitoneal injection of this peptide into zebrafish lowers blood glucose with the same potency than human insulin. In vivo, when applied to water, this peptide reduces overall locomotor activity of zebrafish larvae, observed as a significant decrease in the percentage of time spent swimming and movement frequency. The protein is Con-Ins Tx1 of Conus textile (Cloth-of-gold cone).